The chain runs to 208 residues: Small ribosomal subunit protein uS4 (208 aa).

The region spanning 95–157 is the S4 RNA-binding domain; the sequence is RRIDNVVYRA…DSLKKLVRSN (63 aa).

This sequence belongs to the universal ribosomal protein uS4 family. Part of the 30S ribosomal subunit. Contacts protein S5. The interaction surface between S4 and S5 is involved in control of translational fidelity.

Its function is as follows. One of the primary rRNA binding proteins, it binds directly to 16S rRNA where it nucleates assembly of the body of the 30S subunit. Functionally, with S5 and S12 plays an important role in translational accuracy. The protein is Small ribosomal subunit protein uS4 of Borrelia hermsii (strain HS1 / DAH).